We begin with the raw amino-acid sequence, 171 residues long: ATP synthase subunit b (171 aa).

A helical transmembrane segment spans residues 12 to 34; the sequence is FGLNLNLFETNVINLAVVIFGLY.

Belongs to the ATPase B chain family. In terms of assembly, F-type ATPases have 2 components, F(1) - the catalytic core - and F(0) - the membrane proton channel. F(1) has five subunits: alpha(3), beta(3), gamma(1), delta(1), epsilon(1). F(0) has four main subunits: a(1), b(1), b'(1) and c(10-14). The alpha and beta chains form an alternating ring which encloses part of the gamma chain. F(1) is attached to F(0) by a central stalk formed by the gamma and epsilon chains, while a peripheral stalk is formed by the delta, b and b' chains.

The protein localises to the cellular thylakoid membrane. Functionally, f(1)F(0) ATP synthase produces ATP from ADP in the presence of a proton or sodium gradient. F-type ATPases consist of two structural domains, F(1) containing the extramembraneous catalytic core and F(0) containing the membrane proton channel, linked together by a central stalk and a peripheral stalk. During catalysis, ATP synthesis in the catalytic domain of F(1) is coupled via a rotary mechanism of the central stalk subunits to proton translocation. Its function is as follows. Component of the F(0) channel, it forms part of the peripheral stalk, linking F(1) to F(0). This chain is ATP synthase subunit b, found in Prochlorococcus marinus (strain MIT 9211).